Consider the following 760-residue polypeptide: NAD(P)H-quinone oxidoreductase subunit 5, chloroplastic (760 aa).

The next 16 membrane-spanning stretches (helical) occupy residues 9–29 (WIIS…LLLF), 39–59 (IWAF…TDLF), 89–109 (IDPL…LVLV), 125–145 (FVYM…SNLI), 147–167 (IYIF…FWFT), 185–205 (GDFG…SFEF), 221–241 (NEVH…GAIA), 260–280 (TPIS…FLVA), 282–302 (LLPL…IGII), 329–349 (LGYT…FHLI), 356–376 (ALLF…VGYS), 398–418 (IAFL…CFWS), 429–449 (YSPI…FYMF), 556–576 (ILFP…IGIP), 620–640 (FSVS…KPIY), and 734–754 (FYLL…SSIF).

It belongs to the complex I subunit 5 family. As to quaternary structure, NDH is composed of at least 16 different subunits, 5 of which are encoded in the nucleus.

The protein resides in the plastid. It localises to the chloroplast thylakoid membrane. It catalyses the reaction a plastoquinone + NADH + (n+1) H(+)(in) = a plastoquinol + NAD(+) + n H(+)(out). The enzyme catalyses a plastoquinone + NADPH + (n+1) H(+)(in) = a plastoquinol + NADP(+) + n H(+)(out). In terms of biological role, NDH shuttles electrons from NAD(P)H:plastoquinone, via FMN and iron-sulfur (Fe-S) centers, to quinones in the photosynthetic chain and possibly in a chloroplast respiratory chain. The immediate electron acceptor for the enzyme in this species is believed to be plastoquinone. Couples the redox reaction to proton translocation, and thus conserves the redox energy in a proton gradient. In Populus alba (White poplar), this protein is NAD(P)H-quinone oxidoreductase subunit 5, chloroplastic (ndhF).